Consider the following 129-residue polypeptide: UPF0102 protein Mrad2831_2938 (129 aa).

The protein belongs to the UPF0102 family.

This Methylobacterium radiotolerans (strain ATCC 27329 / DSM 1819 / JCM 2831 / NBRC 15690 / NCIMB 10815 / 0-1) protein is UPF0102 protein Mrad2831_2938.